Reading from the N-terminus, the 213-residue chain is Protein SRN2 (213 aa).

Positions Ser-128–Tyr-213 constitute a VPS37 C-terminal domain.

It belongs to the VPS37 family. In terms of assembly, component of the ESCRT-I complex (endosomal sorting complex required for transport I) which consists of STP22, VPS28, SRN2 and MVB12 in a 1:1:1:1 stoichiometry. Interacts with STP22 and MVB12.

It localises to the cytoplasm. The protein resides in the endosome. It is found in the late endosome membrane. Its function is as follows. Component of the ESCRT-I complex, a regulator of vesicular trafficking process. Required for normal endocytic and biosynthetic traffic to the yeast vacuole. The sequence is that of Protein SRN2 (SRN2) from Saccharomyces cerevisiae (strain ATCC 204508 / S288c) (Baker's yeast).